The primary structure comprises 118 residues: Large ribosomal subunit protein bL20 (118 aa).

It belongs to the bacterial ribosomal protein bL20 family.

In terms of biological role, binds directly to 23S ribosomal RNA and is necessary for the in vitro assembly process of the 50S ribosomal subunit. It is not involved in the protein synthesizing functions of that subunit. In Shewanella baltica (strain OS223), this protein is Large ribosomal subunit protein bL20.